A 688-amino-acid chain; its full sequence is UvrABC system protein B (688 aa).

Residues 31 to 188 (GRVNAGEPDV…RKFVSMQYQR (158 aa)) form the Helicase ATP-binding domain. 44–51 (GATGTGKS) is an ATP binding site. The short motif at 97–120 (YYDYYQPEAYVPQTDTFIEKDSSV) is the Beta-hairpin element. Residues 434–587 (QIDDLLEQIR…QVAYNTEHGI (154 aa)) form the Helicase C-terminal domain. A disordered region spans residues 607–632 (GEDTKKMLEGRGGGKRSPTPNLRREG). Positions 642–677 (ETIISDLNDQMLQAAGELKFELAARLRDELGDLKRE) constitute a UVR domain.

Belongs to the UvrB family. Forms a heterotetramer with UvrA during the search for lesions. Interacts with UvrC in an incision complex.

Its subcellular location is the cytoplasm. Functionally, the UvrABC repair system catalyzes the recognition and processing of DNA lesions. A damage recognition complex composed of 2 UvrA and 2 UvrB subunits scans DNA for abnormalities. Upon binding of the UvrA(2)B(2) complex to a putative damaged site, the DNA wraps around one UvrB monomer. DNA wrap is dependent on ATP binding by UvrB and probably causes local melting of the DNA helix, facilitating insertion of UvrB beta-hairpin between the DNA strands. Then UvrB probes one DNA strand for the presence of a lesion. If a lesion is found the UvrA subunits dissociate and the UvrB-DNA preincision complex is formed. This complex is subsequently bound by UvrC and the second UvrB is released. If no lesion is found, the DNA wraps around the other UvrB subunit that will check the other stand for damage. The chain is UvrABC system protein B from Clavibacter michiganensis subsp. michiganensis (strain NCPPB 382).